A 400-amino-acid polypeptide reads, in one-letter code: Bifunctional enzyme IspD/IspF (400 aa).

Positions 1-244 are 2-C-methyl-D-erythritol 4-phosphate cytidylyltransferase; sequence MSHRVLGTER…LLKERDKMDI (244 aa). The segment at 245–400 is 2-C-methyl-D-erythritol 2,4-cyclodiphosphate synthase; sequence RTGNGYDVHR…ALATVTLVRT (156 aa). A divalent metal cation contacts are provided by Asp-251 and His-253. Residues 251–253 and 277–278 contribute to the 4-CDP-2-C-methyl-D-erythritol 2-phosphate site; these read DVH and HS. His-285 is a binding site for a divalent metal cation. 4-CDP-2-C-methyl-D-erythritol 2-phosphate-binding positions include 299–301, 375–378, Phe-382, and Arg-385; these read DIG and TTSE.

In the N-terminal section; belongs to the IspD/TarI cytidylyltransferase family. IspD subfamily. It in the C-terminal section; belongs to the IspF family. It depends on a divalent metal cation as a cofactor.

The catalysed reaction is 2-C-methyl-D-erythritol 4-phosphate + CTP + H(+) = 4-CDP-2-C-methyl-D-erythritol + diphosphate. The enzyme catalyses 4-CDP-2-C-methyl-D-erythritol 2-phosphate = 2-C-methyl-D-erythritol 2,4-cyclic diphosphate + CMP. It participates in isoprenoid biosynthesis; isopentenyl diphosphate biosynthesis via DXP pathway; isopentenyl diphosphate from 1-deoxy-D-xylulose 5-phosphate: step 2/6. Its pathway is isoprenoid biosynthesis; isopentenyl diphosphate biosynthesis via DXP pathway; isopentenyl diphosphate from 1-deoxy-D-xylulose 5-phosphate: step 4/6. Functionally, bifunctional enzyme that catalyzes the formation of 4-diphosphocytidyl-2-C-methyl-D-erythritol from CTP and 2-C-methyl-D-erythritol 4-phosphate (MEP) (IspD), and catalyzes the conversion of 4-diphosphocytidyl-2-C-methyl-D-erythritol 2-phosphate (CDP-ME2P) to 2-C-methyl-D-erythritol 2,4-cyclodiphosphate (ME-CPP) with a corresponding release of cytidine 5-monophosphate (CMP) (IspF). The chain is Bifunctional enzyme IspD/IspF from Dinoroseobacter shibae (strain DSM 16493 / NCIMB 14021 / DFL 12).